The sequence spans 2009 residues: Rootletin (2009 aa).

2 coiled-coil regions span residues 74-265 (EMAS…VTSD) and 346-438 (ASLH…LRLQ). 5 disordered regions span residues 462–519 (ALSD…CSDS), 575–594 (RDQTAASAQAQEDAQREAQR), 636–665 (ELKRQHNQLEDAQEDSVQEGARARRELERS), 1180–1225 (EAQR…ELRS), and 1448–1501 (GRVS…EAVR). Positions 463–484 (LSDTESGVQLSSSERTADTSDG) are enriched in polar residues. Coiled-coil stretches lie at residues 550-1058 (LGSV…LLAE) and 1091-1439 (LEME…GLRS). Over residues 577-586 (QTAASAQAQE) the composition is skewed to low complexity. The segment covering 656-665 (ARARRELERS) has biased composition (basic and acidic residues). A phosphoserine mark is found at Ser-1453, Ser-1463, and Ser-1469. Position 1475 is a phosphotyrosine (Tyr-1475). 5 positions are modified to phosphoserine: Ser-1476, Ser-1479, Ser-1483, Ser-1489, and Ser-1568. Pro residues predominate over residues 1479–1494 (SQPPSPGLIASPAPPD). 2 coiled-coil regions span residues 1498 to 1697 (EAVR…GTLQ) and 1744 to 1998 (HLQK…RSSA). Residues 1957-2009 (QVQTERTLEARERAHRQRVSGLEEQVSTLKAQLHQELRRSSASVSLPPGTPEK) form a disordered region.

The protein belongs to the rootletin family. As to quaternary structure, homomer. Interacts with KLC3, NEK2 and the N-terminus of CEP250. Interacts with CEP44. In terms of processing, phosphorylated by NEK2 which may regulate its association with centrosomes. In terms of tissue distribution, highest expression detected in photoreceptor cells of retina. Expressed at lower levels in brain, trachea and kidney. Detected in all major ciliated epithelia. During embryonic development, enriched along the apical domains of neuroepithelium in brain ventricular zone, in primordia of retinal pigment epithelia and in neural retina.

It is found in the cytoplasm. The protein localises to the cytoskeleton. The protein resides in the microtubule organizing center. It localises to the centrosome. Its subcellular location is the centriole. It is found in the cilium basal body. In terms of biological role, major structural component of the ciliary rootlet, a cytoskeletal-like structure in ciliated cells which originates from the basal body at the proximal end of a cilium and extends proximally toward the cell nucleus. Furthermore, is required for the correct positioning of the cilium basal body relative to the cell nucleus, to allow for ciliogenesis. Contributes to centrosome cohesion before mitosis. This Mus musculus (Mouse) protein is Rootletin.